We begin with the raw amino-acid sequence, 286 residues long: MSIQHFRVALIPFFAAFCLPVFAHPETLVKVKDAEDQLGARVGYIELDLNSGKILESFRPEERFPMMSTFKVLLCGAVLSRVDAGQEQLGRRIHYSQNDLVEYSPVTEKHLTDGMTVRELCSAAITMSDNTAANLLLTTIGGPKELTAFLHNMGDHVTRLDSWEPELNEAIPNDERDTTMPAAMATTLRKLLTGELLTLASRQQLIDWMEADKVAGPLLRSALPAGWFIADKSGAGERGSRGIIAALGPDGKPSRIVVIYTTGSQATMDERNRQIAEIGASLIKHW.

The first 23 residues, 1–23, serve as a signal peptide directing secretion; sequence MSIQHFRVALIPFFAAFCLPVFA. Catalysis depends on S68, which acts as the Acyl-ester intermediate. A disulfide bridge links C75 with C121. Catalysis depends on E166, which acts as the Proton acceptor. 232 to 234 serves as a coordination point for substrate; that stretch reads KSG.

It belongs to the class-A beta-lactamase family.

It catalyses the reaction a beta-lactam + H2O = a substituted beta-amino acid. TEM-type are the most prevalent beta-lactamases in enterobacteria; they hydrolyze the beta-lactam bond in susceptible beta-lactam antibiotics, thus conferring resistance to penicillins and cephalosporins such as ceftazidime. In Klebsiella oxytoca, this protein is Beta-lactamase TEM-12 (blaT-12b).